The primary structure comprises 532 residues: Cytochrome P450 12b1, mitochondrial (532 aa).

Cys480 serves as a coordination point for heme.

This sequence belongs to the cytochrome P450 family. Heme serves as cofactor.

The protein localises to the mitochondrion. Its function is as follows. Probably involved in steroid hormones biosynthesis. This chain is Cytochrome P450 12b1, mitochondrial (Cyp12b1), found in Drosophila acanthoptera (Fruit fly).